The sequence spans 231 residues: MPKHGKKYVEAAKKVDSNKLYSVEDAIKLVKETSYANFDASVEVSYNLSVDPKQADQQIRGSIVLPNGTGKSVKVIVFAEGPQAEAAKAAGADEVGADDLVEKVQNGYLDFDVVIATPMMMAKVGRLGRVLGPKGLMPNPKTGTVTMDTAKAVQNVKAGQVEYRVDRQASIHTAIGKVSFTEEQLTENFRALQNAILRAKPASAKGQYIKSCAVAATFGPGIKLDPIALMA.

It belongs to the universal ribosomal protein uL1 family. Part of the 50S ribosomal subunit.

Functionally, binds directly to 23S rRNA. The L1 stalk is quite mobile in the ribosome, and is involved in E site tRNA release. Its function is as follows. Protein L1 is also a translational repressor protein, it controls the translation of the L11 operon by binding to its mRNA. The chain is Large ribosomal subunit protein uL1 from Lactobacillus delbrueckii subsp. bulgaricus (strain ATCC 11842 / DSM 20081 / BCRC 10696 / JCM 1002 / NBRC 13953 / NCIMB 11778 / NCTC 12712 / WDCM 00102 / Lb 14).